Here is a 302-residue protein sequence, read N- to C-terminus: Ectoine dioxygenase (302 aa).

Position 128 (glutamine 128) interacts with L-ectoine. 2-oxoglutarate is bound at residue lysine 134. Positions 145, 147, and 246 each coordinate Fe cation.

Belongs to the PhyH family. EctD subfamily. In terms of assembly, homodimer. Requires Fe(2+) as cofactor.

The catalysed reaction is L-ectoine + 2-oxoglutarate + O2 = 5-hydroxyectoine + succinate + CO2. Involved in the biosynthesis of 5-hydroxyectoine, called compatible solute, which helps organisms to survive extreme osmotic stress by acting as a highly soluble organic osmolyte. Catalyzes the 2-oxoglutarate-dependent selective hydroxylation of L-ectoine to yield (4S,5S)-5-hydroxyectoine. The polypeptide is Ectoine dioxygenase (Stutzerimonas stutzeri (strain A1501) (Pseudomonas stutzeri)).